We begin with the raw amino-acid sequence, 459 residues long: Bifunctional protein GlmU (459 aa).

The tract at residues 1–229 (MSNFAIILAA…FDESLGVNDR (229 aa)) is pyrophosphorylase. UDP-N-acetyl-alpha-D-glucosamine-binding positions include 8 to 11 (LAAG), lysine 22, glutamine 72, 77 to 78 (GT), 101 to 102 (GD), glycine 139, glutamate 154, asparagine 169, and asparagine 227. Position 102 (aspartate 102) interacts with Ca(2+). Aspartate 102 lines the Mg(2+) pocket. Asparagine 227 contacts Ca(2+). Asparagine 227 is a binding site for Mg(2+). Residues 230-250 (VALATAESVMRRRINHKHMVN) are linker. The tract at residues 251–459 (GVSFVNPEAT…TRLPHHPKNQ (209 aa)) is N-acetyltransferase. UDP-N-acetyl-alpha-D-glucosamine-binding residues include arginine 332 and lysine 350. The active-site Proton acceptor is the histidine 362. 2 residues coordinate UDP-N-acetyl-alpha-D-glucosamine: tyrosine 365 and asparagine 376. Acetyl-CoA is bound by residues alanine 379, 385–386 (NY), serine 404, alanine 422, and arginine 439.

In the N-terminal section; belongs to the N-acetylglucosamine-1-phosphate uridyltransferase family. The protein in the C-terminal section; belongs to the transferase hexapeptide repeat family. In terms of assembly, homotrimer. The cofactor is Mg(2+). Requires Ca(2+) as cofactor.

The protein resides in the cytoplasm. It carries out the reaction alpha-D-glucosamine 1-phosphate + acetyl-CoA = N-acetyl-alpha-D-glucosamine 1-phosphate + CoA + H(+). The enzyme catalyses N-acetyl-alpha-D-glucosamine 1-phosphate + UTP + H(+) = UDP-N-acetyl-alpha-D-glucosamine + diphosphate. The protein operates within nucleotide-sugar biosynthesis; UDP-N-acetyl-alpha-D-glucosamine biosynthesis; N-acetyl-alpha-D-glucosamine 1-phosphate from alpha-D-glucosamine 6-phosphate (route II): step 2/2. Its pathway is nucleotide-sugar biosynthesis; UDP-N-acetyl-alpha-D-glucosamine biosynthesis; UDP-N-acetyl-alpha-D-glucosamine from N-acetyl-alpha-D-glucosamine 1-phosphate: step 1/1. It functions in the pathway bacterial outer membrane biogenesis; LPS lipid A biosynthesis. In terms of biological role, catalyzes the last two sequential reactions in the de novo biosynthetic pathway for UDP-N-acetylglucosamine (UDP-GlcNAc). The C-terminal domain catalyzes the transfer of acetyl group from acetyl coenzyme A to glucosamine-1-phosphate (GlcN-1-P) to produce N-acetylglucosamine-1-phosphate (GlcNAc-1-P), which is converted into UDP-GlcNAc by the transfer of uridine 5-monophosphate (from uridine 5-triphosphate), a reaction catalyzed by the N-terminal domain. This is Bifunctional protein GlmU from Streptococcus pneumoniae serotype 4 (strain ATCC BAA-334 / TIGR4).